Here is a 118-residue protein sequence, read N- to C-terminus: Ribosome-binding factor A (118 aa).

Belongs to the RbfA family. In terms of assembly, monomer. Binds 30S ribosomal subunits, but not 50S ribosomal subunits or 70S ribosomes.

It is found in the cytoplasm. Functionally, one of several proteins that assist in the late maturation steps of the functional core of the 30S ribosomal subunit. Associates with free 30S ribosomal subunits (but not with 30S subunits that are part of 70S ribosomes or polysomes). Required for efficient processing of 16S rRNA. May interact with the 5'-terminal helix region of 16S rRNA. This Bacillus cereus (strain AH820) protein is Ribosome-binding factor A.